The primary structure comprises 206 residues: MARYLGPKLKLSRREGTDLFLKSGVRAIDSKCKLESAPGQHGARKPRLSEYGLQLREKQKVRRIYGVLEKQFRNYYKEAARLKGNTGENLLQLLETRLDNVVYRMGFGATRAESRQLVSHKSIMVNGRVVNIPSFKVSANDVVSIREKSRTQARIKAALEVAAQREKPTWVEVDSAKMEGAFKRIPERSDLSAEINEQLIVELYSK.

The S4 RNA-binding domain maps to 96-156 (TRLDNVVYRM…EKSRTQARIK (61 aa)).

It belongs to the universal ribosomal protein uS4 family. In terms of assembly, part of the 30S ribosomal subunit. Contacts protein S5. The interaction surface between S4 and S5 is involved in control of translational fidelity.

Its function is as follows. One of the primary rRNA binding proteins, it binds directly to 16S rRNA where it nucleates assembly of the body of the 30S subunit. With S5 and S12 plays an important role in translational accuracy. This is Small ribosomal subunit protein uS4 from Shewanella sp. (strain ANA-3).